Consider the following 117-residue polypeptide: Immunoglobulin kappa variable 1D-12 (117 aa).

The first 22 residues, Met1–Cys22, serve as a signal peptide directing secretion. Residues Asp23 to Cys45 form a framework-1 region. The 94-residue stretch at Ile24–Pro117 folds into the Ig-like domain. Cys45 and Cys110 are disulfide-bonded. The tract at residues Arg46–Ala56 is complementarity-determining-1. Residues Trp57–Tyr71 form a framework-2 region. The complementarity-determining-2 stretch occupies residues Ala72–Ser78. The tract at residues Gly79 to Cys110 is framework-3. The complementarity-determining-3 stretch occupies residues Gln111–Pro117.

Immunoglobulins are composed of two identical heavy chains and two identical light chains; disulfide-linked.

The protein resides in the secreted. The protein localises to the cell membrane. V region of the variable domain of immunoglobulin light chains that participates in the antigen recognition. Immunoglobulins, also known as antibodies, are membrane-bound or secreted glycoproteins produced by B lymphocytes. In the recognition phase of humoral immunity, the membrane-bound immunoglobulins serve as receptors which, upon binding of a specific antigen, trigger the clonal expansion and differentiation of B lymphocytes into immunoglobulins-secreting plasma cells. Secreted immunoglobulins mediate the effector phase of humoral immunity, which results in the elimination of bound antigens. The antigen binding site is formed by the variable domain of one heavy chain, together with that of its associated light chain. Thus, each immunoglobulin has two antigen binding sites with remarkable affinity for a particular antigen. The variable domains are assembled by a process called V-(D)-J rearrangement and can then be subjected to somatic hypermutations which, after exposure to antigen and selection, allow affinity maturation for a particular antigen. In Homo sapiens (Human), this protein is Immunoglobulin kappa variable 1D-12.